The following is a 560-amino-acid chain: Eukaryotic translation initiation factor 3 subunit D-1 (560 aa).

Residues 98-166 (VQKPPHQRGR…RGPPPKMRES (69 aa)) are disordered. Over residues 100-121 (KPPHQRGRFRNMRNSRSGRGRN) the composition is skewed to basic residues. The residue at position 128 (Thr128) is a Phosphothreonine. Over residues 147–156 (GRGMGKKFGH) the composition is skewed to basic residues. An RNA gate region spans residues 291–305 (EFDLLTVNESSVEPP).

Belongs to the eIF-3 subunit D family. Component of the eukaryotic translation initiation factor 3 (eIF-3) complex. The eIF-3 complex interacts with pix.

It localises to the cytoplasm. In terms of biological role, mRNA cap-binding component of the eukaryotic translation initiation factor 3 (eIF-3) complex, which is involved in protein synthesis of a specialized repertoire of mRNAs and, together with other initiation factors, stimulates binding of mRNA and methionyl-tRNAi to the 40S ribosome. The eIF-3 complex specifically targets and initiates translation of a subset of mRNAs involved in cell proliferation. In the eIF-3 complex, eif3d specifically recognizes and binds the 7-methylguanosine cap of a subset of mRNAs. The protein is Eukaryotic translation initiation factor 3 subunit D-1 of Drosophila sechellia (Fruit fly).